The sequence spans 264 residues: Thymidylate synthase (264 aa).

Position 21 (arginine 21) interacts with dUMP. Histidine 51 contacts (6R)-5,10-methylene-5,6,7,8-tetrahydrofolate. Arginine 126 to arginine 127 serves as a coordination point for dUMP. Cysteine 146 functions as the Nucleophile in the catalytic mechanism. DUMP is bound by residues arginine 166–aspartate 169, asparagine 177, and histidine 207–tyrosine 209. Residue aspartate 169 coordinates (6R)-5,10-methylene-5,6,7,8-tetrahydrofolate. Alanine 263 is a (6R)-5,10-methylene-5,6,7,8-tetrahydrofolate binding site.

The protein belongs to the thymidylate synthase family. Bacterial-type ThyA subfamily. Homodimer.

The protein localises to the cytoplasm. The enzyme catalyses dUMP + (6R)-5,10-methylene-5,6,7,8-tetrahydrofolate = 7,8-dihydrofolate + dTMP. It functions in the pathway pyrimidine metabolism; dTTP biosynthesis. Its function is as follows. Catalyzes the reductive methylation of 2'-deoxyuridine-5'-monophosphate (dUMP) to 2'-deoxythymidine-5'-monophosphate (dTMP) while utilizing 5,10-methylenetetrahydrofolate (mTHF) as the methyl donor and reductant in the reaction, yielding dihydrofolate (DHF) as a by-product. This enzymatic reaction provides an intracellular de novo source of dTMP, an essential precursor for DNA biosynthesis. This is Thymidylate synthase from Bartonella quintana (strain Toulouse) (Rochalimaea quintana).